Here is a 219-residue protein sequence, read N- to C-terminus: Protein OPG170 (219 aa).

A signal peptide spans 1-16 (MYSLLFIILMCIPFSF). N-linked (GlcNAc...) asparagine; by host glycosylation is present at asparagine 70.

This sequence belongs to the orthopoxvirus OPG170 family.

Its subcellular location is the secreted. In terms of biological role, may interact with several cellular chemokines to interfere with chemokine-glycosaminoglycan (GAG) interactions at the cell surface to alter chemotaxis of nearby responsive cells. This is Protein OPG170 (OPG170) from Vaccinia virus (strain Copenhagen) (VACV).